Reading from the N-terminus, the 541-residue chain is MAALQYNCDAGLAKAPTFHPSLWGDFFLTYQPPTAPQHVYMKERAELLKEEVREIVKGTNELPKLLDLIITLQRLGLDNHYEIEIDEHLHFIYNSSCDVKDLNLVSLRFYLLRKNGYDVSSDVFLNFKDKDGNFASDDIRSLLSLYNAAYLRTHGEEVLDEAIIFTRRHLEAALTSLESKLADEVSLSLQTPLFRRVRILETRNYIPIYEMEPSRNEAMLEFAKLNFNLLQILYCEELKTVTAWWKQLNIETDLSFIRDRIVEMHFWMAGACSEPKYSLSRVILTKMTAFITILDDIIDTHSTTEEGKLLAKAIDRCSQDANEVLPDYMKHFYMFLLKTFDSCEDELGPNKRYRVFYLKELLKILVRGYSQEIEWRDEHYVPETIDKHLEISRVTVGAFQLACSSFVGMGDIITKEVLDWLLTYPELLKCFTTFVRLSNDITSTKREQTGGHHASTVQCYMMEHSTTMHDACEKIKGLIEDSWKDMMQLYLTPTEQSKVVAQTVVDFARTGDYMYKKTDAFTFSHTIKDMIALLYVEPILF.

Mg(2+)-binding residues include D295, D299, N439, S443, and E447. The DDXXD motif motif lies at 295 to 299 (DDIID).

The protein belongs to the terpene synthase family. Requires Mg(2+) as cofactor. It depends on Mn(2+) as a cofactor.

It is found in the cytoplasm. It catalyses the reaction (2E,6E)-farnesyl diphosphate = alpha-zingiberene + diphosphate. The protein operates within secondary metabolite biosynthesis; terpenoid biosynthesis. In terms of biological role, sesquiterpene synthase converting farnesyl diphosphate into two major products, zingiberene &gt; beta-sesquiphellandrene, and five minor products, 7-epi-sesquithujene, sesquisabinene A, (E)-alpha-bergamotene, (E)-beta-farnesene and beta-bisabolene. Can also accept geranyl diphosphate as substrate, producing nine monoterpenes, with myrcene, limonene and alpha-terpinolene as the major products. This Sorghum bicolor (Sorghum) protein is Zingiberene synthase (TPS1).